We begin with the raw amino-acid sequence, 104 residues long: Small ribosomal subunit protein bS6 (104 aa).

Belongs to the bacterial ribosomal protein bS6 family.

Binds together with bS18 to 16S ribosomal RNA. This is Small ribosomal subunit protein bS6 from Elusimicrobium minutum (strain Pei191).